The chain runs to 335 residues: MTRASVLTGLGSCLPSRCVTNAELERTMDTSDEWIRARTGIAQRYVAEEGTLTSDLAVGAAERALKSARLTPDEIDAVIVATTTPDRPCPATAPTVAARLGTGPVPAFDVSAVCSGFLYGLATGSGLIASGAAERVLVIGAETFSRILNPQDRSTSVIFGDGAGAVVLRAGEPGETGALGPLRLGSDGTGVDLITVPAGGPPRPGAAAPDDLADRYFTMEGKRVFWLAVQRMGECAESVLDRAGWRVADVDWLVSHQANHRITARLADEIGIPRERSVSNIAEVGNTAAASIPLALDHAHARGTLRPGDRVLLTAFGGGLTWGAAALTWPAVDPV.

Active-site residues include Cys-114 and His-256. The ACP-binding stretch occupies residues 257–261 (QANHR). Asn-286 is an active-site residue.

This sequence belongs to the thiolase-like superfamily. FabH family. Homodimer.

The protein resides in the cytoplasm. The catalysed reaction is malonyl-[ACP] + acetyl-CoA + H(+) = 3-oxobutanoyl-[ACP] + CO2 + CoA. The protein operates within lipid metabolism; fatty acid biosynthesis. In terms of biological role, catalyzes the condensation reaction of fatty acid synthesis by the addition to an acyl acceptor of two carbons from malonyl-ACP. Catalyzes the first condensation reaction which initiates fatty acid synthesis and may therefore play a role in governing the total rate of fatty acid production. Possesses both acetoacetyl-ACP synthase and acetyl transacylase activities. Its substrate specificity determines the biosynthesis of branched-chain and/or straight-chain of fatty acids. This chain is Beta-ketoacyl-[acyl-carrier-protein] synthase III 3, found in Streptomyces coelicolor (strain ATCC BAA-471 / A3(2) / M145).